A 389-amino-acid polypeptide reads, in one-letter code: Histidinol-phosphate aminotransferase (389 aa).

K233 carries the post-translational modification N6-(pyridoxal phosphate)lysine.

The protein belongs to the class-II pyridoxal-phosphate-dependent aminotransferase family. The cofactor is pyridoxal 5'-phosphate.

It catalyses the reaction L-histidinol phosphate + 2-oxoglutarate = 3-(imidazol-4-yl)-2-oxopropyl phosphate + L-glutamate. It participates in amino-acid biosynthesis; L-histidine biosynthesis; L-histidine from 5-phospho-alpha-D-ribose 1-diphosphate: step 7/9. In Candida maltosa (Yeast), this protein is Histidinol-phosphate aminotransferase (HIS5).